Here is a 101-residue protein sequence, read N- to C-terminus: Small ribosomal subunit protein uS14 (101 aa).

It belongs to the universal ribosomal protein uS14 family. In terms of assembly, part of the 30S ribosomal subunit. Contacts proteins S3 and S10.

In terms of biological role, binds 16S rRNA, required for the assembly of 30S particles and may also be responsible for determining the conformation of the 16S rRNA at the A site. In Shewanella halifaxensis (strain HAW-EB4), this protein is Small ribosomal subunit protein uS14.